The chain runs to 309 residues: Aspartate carbamoyltransferase catalytic subunit (309 aa).

Positions 58 and 59 each coordinate carbamoyl phosphate. Position 86 (Lys86) interacts with L-aspartate. The carbamoyl phosphate site is built by Arg108, His136, and Gln139. L-aspartate is bound by residues Arg169 and Arg223. Residues Gly264 and Pro265 each contribute to the carbamoyl phosphate site.

Belongs to the aspartate/ornithine carbamoyltransferase superfamily. ATCase family. As to quaternary structure, heterododecamer (2C3:3R2) of six catalytic PyrB chains organized as two trimers (C3), and six regulatory PyrI chains organized as three dimers (R2).

The catalysed reaction is carbamoyl phosphate + L-aspartate = N-carbamoyl-L-aspartate + phosphate + H(+). The protein operates within pyrimidine metabolism; UMP biosynthesis via de novo pathway; (S)-dihydroorotate from bicarbonate: step 2/3. In terms of biological role, catalyzes the condensation of carbamoyl phosphate and aspartate to form carbamoyl aspartate and inorganic phosphate, the committed step in the de novo pyrimidine nucleotide biosynthesis pathway. In Pelotomaculum thermopropionicum (strain DSM 13744 / JCM 10971 / SI), this protein is Aspartate carbamoyltransferase catalytic subunit.